Reading from the N-terminus, the 619-residue chain is Probable Xaa-Pro aminopeptidase P (619 aa).

4 residues coordinate Mn(2+): Asp-415, Asp-426, Glu-524, and Glu-538.

This sequence belongs to the peptidase M24B family. Mn(2+) is required as a cofactor.

It catalyses the reaction Release of any N-terminal amino acid, including proline, that is linked to proline, even from a dipeptide or tripeptide.. Its function is as follows. Catalyzes the removal of a penultimate prolyl residue from the N-termini of peptides. The chain is Probable Xaa-Pro aminopeptidase P (AMPP) from Fusarium vanettenii (strain ATCC MYA-4622 / CBS 123669 / FGSC 9596 / NRRL 45880 / 77-13-4) (Fusarium solani subsp. pisi).